The following is a 188-amino-acid chain: Peptidyl-tRNA hydrolase (188 aa).

Tyr14 lines the tRNA pocket. His19 serves as the catalytic Proton acceptor. Residues Tyr64, Asn66, and Asn112 each contribute to the tRNA site.

It belongs to the PTH family. Monomer.

Its subcellular location is the cytoplasm. The catalysed reaction is an N-acyl-L-alpha-aminoacyl-tRNA + H2O = an N-acyl-L-amino acid + a tRNA + H(+). Its function is as follows. Hydrolyzes ribosome-free peptidyl-tRNAs (with 1 or more amino acids incorporated), which drop off the ribosome during protein synthesis, or as a result of ribosome stalling. In terms of biological role, catalyzes the release of premature peptidyl moieties from peptidyl-tRNA molecules trapped in stalled 50S ribosomal subunits, and thus maintains levels of free tRNAs and 50S ribosomes. This chain is Peptidyl-tRNA hydrolase, found in Leuconostoc mesenteroides subsp. mesenteroides (strain ATCC 8293 / DSM 20343 / BCRC 11652 / CCM 1803 / JCM 6124 / NCDO 523 / NBRC 100496 / NCIMB 8023 / NCTC 12954 / NRRL B-1118 / 37Y).